We begin with the raw amino-acid sequence, 546 residues long: Probable zinc metalloprotease EGY2, chloroplastic (546 aa).

A chloroplast-targeting transit peptide spans 1 to 64; it reads MQLPAMSCSP…QIRNRRFVCQ (64 aa). The interval 67 to 143 is disordered; that stretch reads TETEPDGDGN…DATPASDAQE (77 aa). Positions 69 to 86 are enriched in acidic residues; it reads TEPDGDGNGDEEKEELGD. Composition is skewed to polar residues over residues 89 to 110 and 118 to 130; these read SSPS…TNAD and NTEP…TVQN. The next 7 membrane-spanning stretches (helical) occupy residues 257-277, 301-321, 326-346, 364-384, 427-447, 474-494, and 514-534; these read AVPE…TLLL, VYGA…HILA, GIKL…FGAI, AAGP…GFIL, PLVL…IPAG, LLGI…LIFF, and YISI…PYPF.

This sequence belongs to the peptidase M50B family.

The protein localises to the plastid. Its subcellular location is the chloroplast membrane. Its function is as follows. Probable membrane-associated metalloprotease that may be involved in chloroplast development. The protein is Probable zinc metalloprotease EGY2, chloroplastic (EGY2) of Oryza sativa subsp. japonica (Rice).